The sequence spans 765 residues: Kinesin-like protein KIN-14S (765 aa).

Positions 132–456 (NIRVFCRCRP…LNFASRVRGI (325 aa)) constitute a Kinesin motor domain. ATP is bound at residue 215–222 (GQTGTGKT). Residues 469–534 (ELLKSKQMAE…ERKTRIKQES (66 aa)) adopt a coiled-coil conformation. 2 disordered regions span residues 581–613 (MPQQ…SSMD) and 654–678 (LRPE…RGDP). Residues 602–611 (NNNSNRRSSS) show a composition bias toward low complexity.

The protein belongs to the TRAFAC class myosin-kinesin ATPase superfamily. Kinesin family. KIN-14 subfamily.

This Arabidopsis thaliana (Mouse-ear cress) protein is Kinesin-like protein KIN-14S.